Reading from the N-terminus, the 200-residue chain is dITP/XTP pyrophosphatase (200 aa).

8 to 13 is a binding site for substrate; it reads TRNAGK. Residue Asp72 is the Proton acceptor of the active site. Asp72 is a binding site for Mg(2+). Residues Ser73, 155 to 158, Lys178, and 183 to 184 each bind substrate; these read FGYD and HR.

Belongs to the HAM1 NTPase family. In terms of assembly, homodimer. The cofactor is Mg(2+).

The enzyme catalyses XTP + H2O = XMP + diphosphate + H(+). The catalysed reaction is dITP + H2O = dIMP + diphosphate + H(+). It catalyses the reaction ITP + H2O = IMP + diphosphate + H(+). Functionally, pyrophosphatase that catalyzes the hydrolysis of nucleoside triphosphates to their monophosphate derivatives, with a high preference for the non-canonical purine nucleotides XTP (xanthosine triphosphate), dITP (deoxyinosine triphosphate) and ITP. Seems to function as a house-cleaning enzyme that removes non-canonical purine nucleotides from the nucleotide pool, thus preventing their incorporation into DNA/RNA and avoiding chromosomal lesions. This chain is dITP/XTP pyrophosphatase, found in Streptomyces coelicolor (strain ATCC BAA-471 / A3(2) / M145).